We begin with the raw amino-acid sequence, 308 residues long: MTSKLEQLKQFTTVVADTGDLDAITRLKPVDATTNPSLLLKAAAIPGYADLLKQVKSDAKGNVDLACDKFAVAVGAGILKVIPGRISTEVDARLSFDEPALLSKARQLIELYQAAGIPKDRVLIKLASTWEGIRAAEQLEKEGIQTNLTLLFSFAQAQACADAGVFLISPFVGRIYDWYKKSTGQEYVGANDPGVQSVTRIYNYYKANGYNTVVMGASFRNIGQIEQLAGCDRLTISPELLQQLSDDQGELPQVLKPGDAGEAKQVLSESQFRWAMNEDAMGTEKLAEGIRQFARDQEKLEKLMADKA.

The active-site Schiff-base intermediate with substrate is lysine 125.

Belongs to the transaldolase family. Type 1 subfamily. Homodimer.

The protein resides in the cytoplasm. It carries out the reaction D-sedoheptulose 7-phosphate + D-glyceraldehyde 3-phosphate = D-erythrose 4-phosphate + beta-D-fructose 6-phosphate. Its pathway is carbohydrate degradation; pentose phosphate pathway; D-glyceraldehyde 3-phosphate and beta-D-fructose 6-phosphate from D-ribose 5-phosphate and D-xylulose 5-phosphate (non-oxidative stage): step 2/3. Its function is as follows. Transaldolase is important for the balance of metabolites in the pentose-phosphate pathway. The protein is Transaldolase of Pseudomonas putida (strain W619).